The chain runs to 306 residues: Acetyl-coenzyme A carboxylase carboxyl transferase subunit beta (306 aa).

The region spanning 25-294 is the CoA carboxyltransferase N-terminal domain; the sequence is VWTKCDSCGQ…PSPDAPREAV (270 aa). Residues cysteine 29, cysteine 32, cysteine 48, and cysteine 51 each contribute to the Zn(2+) site. The segment at 29–51 adopts a C4-type zinc-finger fold; sequence CDSCGQVLYRAELERNLEVCPKC. The segment at 286-306 is disordered; sequence SPDAPREAVVVPPVPDQDHEA.

Belongs to the AccD/PCCB family. In terms of assembly, acetyl-CoA carboxylase is a heterohexamer composed of biotin carboxyl carrier protein (AccB), biotin carboxylase (AccC) and two subunits each of ACCase subunit alpha (AccA) and ACCase subunit beta (AccD). Zn(2+) serves as cofactor.

Its subcellular location is the cytoplasm. The catalysed reaction is N(6)-carboxybiotinyl-L-lysyl-[protein] + acetyl-CoA = N(6)-biotinyl-L-lysyl-[protein] + malonyl-CoA. Its pathway is lipid metabolism; malonyl-CoA biosynthesis; malonyl-CoA from acetyl-CoA: step 1/1. Its function is as follows. Component of the acetyl coenzyme A carboxylase (ACC) complex. Biotin carboxylase (BC) catalyzes the carboxylation of biotin on its carrier protein (BCCP) and then the CO(2) group is transferred by the transcarboxylase to acetyl-CoA to form malonyl-CoA. This is Acetyl-coenzyme A carboxylase carboxyl transferase subunit beta from Cronobacter sakazakii (strain ATCC BAA-894) (Enterobacter sakazakii).